The chain runs to 243 residues: 1-(5-phosphoribosyl)-5-[(5-phosphoribosylamino)methylideneamino] imidazole-4-carboxamide isomerase (243 aa).

The Proton acceptor role is filled by Asp-8. The active-site Proton donor is Asp-130.

This sequence belongs to the HisA/HisF family.

It localises to the cytoplasm. The catalysed reaction is 1-(5-phospho-beta-D-ribosyl)-5-[(5-phospho-beta-D-ribosylamino)methylideneamino]imidazole-4-carboxamide = 5-[(5-phospho-1-deoxy-D-ribulos-1-ylimino)methylamino]-1-(5-phospho-beta-D-ribosyl)imidazole-4-carboxamide. Its pathway is amino-acid biosynthesis; L-histidine biosynthesis; L-histidine from 5-phospho-alpha-D-ribose 1-diphosphate: step 4/9. The protein is 1-(5-phosphoribosyl)-5-[(5-phosphoribosylamino)methylideneamino] imidazole-4-carboxamide isomerase of Vesicomyosocius okutanii subsp. Calyptogena okutanii (strain HA).